Here is a 247-residue protein sequence, read N- to C-terminus: Probable transcriptional regulatory protein GTNG_2524 (247 aa).

The segment covering 1 to 14 (MAGHSKWKNIQRRK) has biased composition (basic residues). The interval 1 to 21 (MAGHSKWKNIQRRKNAQDAKR) is disordered.

Belongs to the TACO1 family.

The protein localises to the cytoplasm. In Geobacillus thermodenitrificans (strain NG80-2), this protein is Probable transcriptional regulatory protein GTNG_2524.